The following is a 933-amino-acid chain: Progesterone receptor (933 aa).

A disordered region spans residues 1-48 (MTELKAKGPRAPHVAGGPPSPEVGSPLLCRPAAGPFEGSQTSDTLPEV). An AF3; mediates transcriptional activation region spans residues 1–164 (MTELKAKGPR…PATQRVLSPL (164 aa)). The tract at residues 1–566 (MTELKAKGPR…YSFESLPQKI (566 aa)) is modulating, Pro-Rich. S20 carries the phosphoserine modification. Positions 55 to 59 (LDGLL) match the LXXL motif 1 motif. The disordered stretch occupies residues 66-255 (GQDLPDEKTQ…GAAAGGGAAA (190 aa)). Phosphoserine is present on S81. Positions 115-119 (LDTLL) match the LXXL motif 2 motif. Residues S130 and S162 each carry the phosphoserine modification. Residues 165-305 (MSRSGGKTGD…LATTMMDFIH (141 aa)) are mediates transcriptional transrepression. The short motif at 183-187 (KVLPR) is the Nuclear localization signal element. S190 and S213 each carry phosphoserine. Phosphoserine; by MAPK1 is present on S294. The interval 331–378 (GGAGAASAFAPPQSSPSASSTPVAVGDFPDCAYPPDAEPKDNAYPLYG) is disordered. The span at 335–350 (AASAFAPPQSSPSASS) shows a compositional bias: low complexity. At S345 the chain carries Phosphoserine; by MAPK. A Glycyl lysine isopeptide (Lys-Gly) (interchain with G-Cter in SUMO); alternate cross-link involves residue K388. Residue K388 forms a Glycyl lysine isopeptide (Lys-Gly) (interchain with G-Cter in ubiquitin); alternate linkage. Position 400 is a phosphoserine; by CDK2 (S400). The segment at 415–454 (PDYPLGPPPQLPPRAPPSRPGEAAVTAAPASASVSSASSP) is disordered. The span at 418–433 (PLGPPPQLPPRAPPSR) shows a compositional bias: pro residues. Low complexity predominate over residues 437–454 (AAVTAAPASASVSSASSP). An AF1; mediates transcriptional activation region spans residues 456–546 (STLECILYKA…VYPPYLNYLR (91 aa)). K531 participates in a covalent cross-link: Glycyl lysine isopeptide (Lys-Gly) (interchain with G-Cter in SUMO). NR C4-type zinc fingers lie at residues 567 to 587 (CLICGDEASGCHYGVLTCGSC) and 603 to 627 (CAGRNDCIVDKIRRKNCPACRLRKC). The nuclear receptor DNA-binding region spans 567–639 (CLICGDEASG…AGMVLGGRKF (73 aa)). At S676 the chain carries Phosphoserine. The NR LBD domain occupies 679-913 (QDIQLIPPLI…EFPEMMSEVI (235 aa)). Residues 687-933 (LIKLLMSIEP…MVKPLLFHKK (247 aa)) are AF2; mediates transcriptional activation.

Belongs to the nuclear hormone receptor family. Interacts with SMARD1 and UNC45A. Interacts with CUEDC2; the interaction promotes ubiquitination, decreases sumoylation, and represses transcriptional activity. Interacts with PIAS3; the interaction promotes sumoylation of PR in a hormone-dependent manner, inhibits DNA-binding, and alters nuclear export. Interacts with SP1; the interaction requires ligand-induced phosphorylation on Ser-345 by ERK1/2-MAPK. Interacts with PRMT2. Interacts with NCOA2 and NCOA1. Interacts with KLF9. Interacts with GTF2B. Post-translationally, phosphorylated on multiple serine sites. Several of these sites are hormone-dependent. Phosphorylation on Ser-294 is highly hormone-dependent and modulates ubiquitination and sumoylation on Lys-388. Phosphorylation on Ser-345 also requires induction by hormone. Basal phosphorylation on Ser-81, Ser-162, Ser-190 and Ser-400 is increased in response to progesterone and can be phosphorylated in vitro by the CDK2-A1 complex. Increased levels of phosphorylation on Ser-400 also in the presence of EGF, heregulin, IGF, PMA and FBS. Phosphorylation at this site by CDK2 is ligand-independent, and increases nuclear translocation and transcriptional activity. Phosphorylation at Ser-162 and Ser-294, but not at Ser-190, is impaired during the G(2)/M phase of the cell cycle. Phosphorylation on Ser-345 by ERK1/2 MAPK is required for interaction with SP1. Sumoylation is hormone-dependent and represses transcriptional activity. Sumoylation on all three sites is enhanced by PIAS3. Desumoylated by SENP1. Sumoylation on Lys-388, the main site of sumoylation, is repressed by ubiquitination on the same site, and modulated by phosphorylation at Ser-294. In terms of processing, ubiquitination is hormone-dependent and represses sumoylation on the same site. Promoted by MAPK-mediated phosphorylation on Ser-294. Post-translationally, palmitoylated by ZDHHC7 and ZDHHC21. Palmitoylation is required for plasma membrane targeting and for rapid intracellular signaling via ERK and AKT kinases and cAMP generation.

It is found in the nucleus. It localises to the cytoplasm. Functionally, the steroid hormones and their receptors are involved in the regulation of eukaryotic gene expression and affect cellular proliferation and differentiation in target tissues. Transcriptional activator of several progesteron-dependent promoters in a variety of cell types. Involved in activation of SRC-dependent MAPK signaling on hormone stimulation. This is Progesterone receptor (PGR) from Trachypithecus obscurus (Dusky leaf-monkey).